We begin with the raw amino-acid sequence, 314 residues long: Olfactory receptor 5D14 (314 aa).

The Extracellular portion of the chain corresponds to 1-27 (MMMVLRNLSMEPTFALLGFTDYPKLQI). The N-linked (GlcNAc...) asparagine glycan is linked to asparagine 7. Residues 28–48 (PLFLVFLLMYVITVVGNLGMI) traverse the membrane as a helical segment. Over 49–56 (IIIKINPK) the chain is Cytoplasmic. Residues 57–77 (FHTPMYFFLSHLSFVDFCYSS) form a helical membrane-spanning segment. At 78 to 101 (IVTPKLLENLVMADKSIFYFSCMM) the chain is on the extracellular side. Residues 102–122 (QYFLSCTAVVTESFLLAVMAY) form a helical membrane-spanning segment. Over 123–141 (DRFVAICNPLLYTVAMSQR) the chain is Cytoplasmic. Residues 142-162 (LCALLVAGSYLWGMFGPLVLL) traverse the membrane as a helical segment. The Extracellular portion of the chain corresponds to 163–198 (CYALRLNFSGPNVINHFFCEYTALISVSGSDILIPH). Asparagine 169 carries an N-linked (GlcNAc...) asparagine glycan. The helical transmembrane segment at 199–219 (LLLFSFATFNEMCTLLIILTS) threads the bilayer. The Cytoplasmic segment spans residues 220-239 (YVFIFVTVLKIRSVSGRHKA). Residues 240 to 260 (FSTWASHLTSITIFHGTILFL) traverse the membrane as a helical segment. Topologically, residues 261 to 273 (YCVPNSKNSRQTV) are extracellular. A helical membrane pass occupies residues 274–294 (KVASVFYTVVNPMLNPLIYSL). Residues 295–314 (RNKDVKDAFWKLIHTQVPFH) lie on the Cytoplasmic side of the membrane.

Belongs to the G-protein coupled receptor 1 family.

It localises to the cell membrane. Odorant receptor. This Homo sapiens (Human) protein is Olfactory receptor 5D14 (OR5D14).